The following is a 64-amino-acid chain: Large ribosomal subunit protein uL30 (64 aa).

A disordered region spans residues 1–22; the sequence is MAKAAKTIKVEQTGSAIRRHHS.

The protein belongs to the universal ribosomal protein uL30 family. As to quaternary structure, part of the 50S ribosomal subunit.

In Nitrobacter winogradskyi (strain ATCC 25391 / DSM 10237 / CIP 104748 / NCIMB 11846 / Nb-255), this protein is Large ribosomal subunit protein uL30.